A 359-amino-acid chain; its full sequence is Phosphoserine aminotransferase (359 aa).

Residues Ser-9 and Arg-42 each contribute to the L-glutamate site. Residues 76–77 (AS), Trp-102, Thr-152, Asp-171, and Gln-194 each bind pyridoxal 5'-phosphate. The residue at position 195 (Lys-195) is an N6-(pyridoxal phosphate)lysine. 236 to 237 (NT) contributes to the pyridoxal 5'-phosphate binding site.

This sequence belongs to the class-V pyridoxal-phosphate-dependent aminotransferase family. SerC subfamily. As to quaternary structure, homodimer. Requires pyridoxal 5'-phosphate as cofactor.

It is found in the cytoplasm. It carries out the reaction O-phospho-L-serine + 2-oxoglutarate = 3-phosphooxypyruvate + L-glutamate. The enzyme catalyses 4-(phosphooxy)-L-threonine + 2-oxoglutarate = (R)-3-hydroxy-2-oxo-4-phosphooxybutanoate + L-glutamate. Its pathway is amino-acid biosynthesis; L-serine biosynthesis; L-serine from 3-phospho-D-glycerate: step 2/3. It functions in the pathway cofactor biosynthesis; pyridoxine 5'-phosphate biosynthesis; pyridoxine 5'-phosphate from D-erythrose 4-phosphate: step 3/5. In terms of biological role, catalyzes the reversible conversion of 3-phosphohydroxypyruvate to phosphoserine and of 3-hydroxy-2-oxo-4-phosphonooxybutanoate to phosphohydroxythreonine. This chain is Phosphoserine aminotransferase, found in Marinomonas sp. (strain MWYL1).